The sequence spans 158 residues: 6,7-dimethyl-8-ribityllumazine synthase (158 aa).

5-amino-6-(D-ribitylamino)uracil contacts are provided by residues phenylalanine 22, 57-59 (AVE), and 81-83 (AVI). A (2S)-2-hydroxy-3-oxobutyl phosphate-binding site is contributed by 86 to 87 (GT). The active-site Proton donor is the histidine 89. Phenylalanine 114 contacts 5-amino-6-(D-ribitylamino)uracil. Arginine 128 is a binding site for (2S)-2-hydroxy-3-oxobutyl phosphate.

Belongs to the DMRL synthase family. In terms of assembly, forms an icosahedral capsid composed of 60 subunits, arranged as a dodecamer of pentamers.

The enzyme catalyses (2S)-2-hydroxy-3-oxobutyl phosphate + 5-amino-6-(D-ribitylamino)uracil = 6,7-dimethyl-8-(1-D-ribityl)lumazine + phosphate + 2 H2O + H(+). It participates in cofactor biosynthesis; riboflavin biosynthesis; riboflavin from 2-hydroxy-3-oxobutyl phosphate and 5-amino-6-(D-ribitylamino)uracil: step 1/2. In terms of biological role, catalyzes the formation of 6,7-dimethyl-8-ribityllumazine by condensation of 5-amino-6-(D-ribitylamino)uracil with 3,4-dihydroxy-2-butanone 4-phosphate. This is the penultimate step in the biosynthesis of riboflavin. In Shewanella pealeana (strain ATCC 700345 / ANG-SQ1), this protein is 6,7-dimethyl-8-ribityllumazine synthase.